The following is a 126-amino-acid chain: MHLSLLKAKIHRATVTHAELNYEGSIAIDGLLLEATGIREFEQVHIWDVTNGARFSTYAIRAEDGSGIMSLNGGAARHVQVGDLIIVAAFASMSEDEAKTFKPNLVYVNARNAISHTNHSIPTQAA.

The active-site Schiff-base intermediate with substrate; via pyruvic acid is the S25. Pyruvic acid (Ser) is present on S25. T57 provides a ligand contact to substrate. Y58 functions as the Proton donor in the catalytic mechanism. Position 73-75 (73-75) interacts with substrate; it reads GGA.

It belongs to the PanD family. In terms of assembly, heterooctamer of four alpha and four beta subunits. Requires pyruvate as cofactor. In terms of processing, is synthesized initially as an inactive proenzyme, which is activated by self-cleavage at a specific serine bond to produce a beta-subunit with a hydroxyl group at its C-terminus and an alpha-subunit with a pyruvoyl group at its N-terminus.

Its subcellular location is the cytoplasm. The catalysed reaction is L-aspartate + H(+) = beta-alanine + CO2. Its pathway is cofactor biosynthesis; (R)-pantothenate biosynthesis; beta-alanine from L-aspartate: step 1/1. In terms of biological role, catalyzes the pyruvoyl-dependent decarboxylation of aspartate to produce beta-alanine. The chain is Aspartate 1-decarboxylase from Xanthomonas oryzae pv. oryzae (strain MAFF 311018).